Consider the following 183-residue polypeptide: ATP synthase subunit b, chloroplastic (183 aa).

A helical transmembrane segment spans residues 25–45 (DILATNLINLTVVVGVLIFFG).

It belongs to the ATPase B chain family. F-type ATPases have 2 components, F(1) - the catalytic core - and F(0) - the membrane proton channel. F(1) has five subunits: alpha(3), beta(3), gamma(1), delta(1), epsilon(1). F(0) has four main subunits: a(1), b(1), b'(1) and c(10-14). The alpha and beta chains form an alternating ring which encloses part of the gamma chain. F(1) is attached to F(0) by a central stalk formed by the gamma and epsilon chains, while a peripheral stalk is formed by the delta, b and b' chains.

The protein localises to the plastid. Its subcellular location is the chloroplast thylakoid membrane. Its function is as follows. F(1)F(0) ATP synthase produces ATP from ADP in the presence of a proton or sodium gradient. F-type ATPases consist of two structural domains, F(1) containing the extramembraneous catalytic core and F(0) containing the membrane proton channel, linked together by a central stalk and a peripheral stalk. During catalysis, ATP synthesis in the catalytic domain of F(1) is coupled via a rotary mechanism of the central stalk subunits to proton translocation. Functionally, component of the F(0) channel, it forms part of the peripheral stalk, linking F(1) to F(0). The polypeptide is ATP synthase subunit b, chloroplastic (Zea mays (Maize)).